A 283-amino-acid chain; its full sequence is Protein/nucleic acid deglycase HchA (283 aa).

The Zn(2+) site is built by H86, E91, and H123. The Nucleophile role is filled by C185.

It belongs to the peptidase C56 family. HchA subfamily. As to quaternary structure, homodimer.

The protein localises to the cytoplasm. The catalysed reaction is N(omega)-(1-hydroxy-2-oxopropyl)-L-arginyl-[protein] + H2O = lactate + L-arginyl-[protein] + H(+). It catalyses the reaction N(6)-(1-hydroxy-2-oxopropyl)-L-lysyl-[protein] + H2O = lactate + L-lysyl-[protein] + H(+). The enzyme catalyses S-(1-hydroxy-2-oxopropyl)-L-cysteinyl-[protein] + H2O = lactate + L-cysteinyl-[protein] + H(+). It carries out the reaction N(omega)-(1-hydroxy-2-oxoethyl)-L-arginyl-[protein] + H2O = L-arginyl-[protein] + glycolate + H(+). The catalysed reaction is N(6)-(1-hydroxy-2-oxoethyl)-L-lysyl-[protein] + H2O = glycolate + L-lysyl-[protein] + H(+). It catalyses the reaction S-(1-hydroxy-2-oxoethyl)-L-cysteinyl-[protein] + H2O = glycolate + L-cysteinyl-[protein] + H(+). The enzyme catalyses N(2)-(1-hydroxy-2-oxopropyl)-dGTP + H2O = lactate + dGTP + H(+). It carries out the reaction N(2)-(1-hydroxy-2-oxopropyl)-GTP + H2O = lactate + GTP + H(+). The catalysed reaction is N(2)-(1-hydroxy-2-oxopropyl)-GDP + H2O = lactate + GDP + H(+). It catalyses the reaction N(2)-(1-hydroxy-2-oxopropyl)-GMP + H2O = lactate + GMP + H(+). The enzyme catalyses N(2)-(1-hydroxy-2-oxoethyl)-dGTP + H2O = dGTP + glycolate + H(+). It carries out the reaction N(2)-(1-hydroxy-2-oxoethyl)-GTP + H2O = glycolate + GTP + H(+). The catalysed reaction is N(2)-(1-hydroxy-2-oxoethyl)-GDP + H2O = glycolate + GDP + H(+). It catalyses the reaction N(2)-(1-hydroxy-2-oxoethyl)-GMP + H2O = glycolate + GMP + H(+). The enzyme catalyses an N(2)-(1-hydroxy-2-oxopropyl)-guanosine in RNA + H2O = a guanosine in RNA + lactate + H(+). It carries out the reaction an N(2)-(1-hydroxy-2-oxopropyl)-2'-deoxyguanosine in DNA + H2O = a 2'-deoxyguanosine in DNA + lactate + H(+). The catalysed reaction is an N(2)-(1-hydroxy-2-oxoethyl)-guanosine in RNA + H2O = a guanosine in RNA + glycolate + H(+). It catalyses the reaction an N(2)-(1-hydroxy-2-oxoethyl)-2'-deoxyguanosine in DNA + H2O = a 2'-deoxyguanosine in DNA + glycolate + H(+). Its function is as follows. Protein and nucleotide deglycase that catalyzes the deglycation of the Maillard adducts formed between amino groups of proteins or nucleotides and reactive carbonyl groups of glyoxals. Thus, functions as a protein deglycase that repairs methylglyoxal- and glyoxal-glycated proteins, and releases repaired proteins and lactate or glycolate, respectively. Deglycates cysteine, arginine and lysine residues in proteins, and thus reactivates these proteins by reversing glycation by glyoxals. Acts on early glycation intermediates (hemithioacetals and aminocarbinols), preventing the formation of Schiff bases and advanced glycation endproducts (AGE). Also functions as a nucleotide deglycase able to repair glycated guanine in the free nucleotide pool (GTP, GDP, GMP, dGTP) and in DNA and RNA. Is thus involved in a major nucleotide repair system named guanine glycation repair (GG repair), dedicated to reversing methylglyoxal and glyoxal damage via nucleotide sanitization and direct nucleic acid repair. Plays an important role in protecting cells from carbonyl stress. In Escherichia coli O139:H28 (strain E24377A / ETEC), this protein is Protein/nucleic acid deglycase HchA.